Here is a 140-residue protein sequence, read N- to C-terminus: Non-specific lipid transfer protein GPI-anchored 33 (140 aa).

The signal sequence occupies residues 1 to 27 (MAYTNKVTISAAVATMMLFLAVTIVDA). 4 disulfides stabilise this stretch: cysteine 40–cysteine 80, cysteine 52–cysteine 64, cysteine 65–cysteine 104, and cysteine 78–cysteine 112. Residue asparagine 91 is glycosylated (N-linked (GlcNAc...) asparagine). Glycine 115 carries the GPI-anchor amidated glycine lipid modification. The propeptide at 116–140 (DASGGSTNKIAASMVLLGLVASLFF) is removed in mature form.

The protein belongs to the plant LTP family.

The protein resides in the cell membrane. Functionally, probable lipid transfer protein. This chain is Non-specific lipid transfer protein GPI-anchored 33, found in Arabidopsis thaliana (Mouse-ear cress).